The sequence spans 794 residues: ATP-dependent RNA helicase SUPV3L1, mitochondrial (794 aa).

The transit peptide at 1-30 (MRRCAWPLLRLSSRVGLALRHGGAVRLRQA) directs the protein to the mitochondrion. Residues 182-322 (EARAIQRKII…AIDLVTELMY (141 aa)) form the Helicase ATP-binding domain. Residue 195–202 (GPTNSGKT) participates in ATP binding. Residues 341-506 (VLDYALESLD…GLHPTPEQIE (166 aa)) enclose the Helicase C-terminal domain. Disordered stretches follow at residues 678 to 741 (EVMS…HGRG) and 764 to 794 (EWQD…KKKK). Positions 689 to 704 (TKRDARTVSDHRDAKS) are enriched in basic and acidic residues.

The protein belongs to the helicase family. Mg(2+) is required as a cofactor. It depends on Mn(2+) as a cofactor.

The protein resides in the nucleus. It is found in the mitochondrion matrix. Its subcellular location is the mitochondrion nucleoid. It carries out the reaction ATP + H2O = ADP + phosphate + H(+). Functionally, major helicase player in mitochondrial RNA metabolism. Component of the mitochondrial degradosome (mtEXO) complex, that degrades 3' overhang double-stranded RNA with a 3'-to-5' directionality in an ATP-dependent manner. ATPase and ATP-dependent multisubstrate helicase, able to unwind double-stranded (ds) DNA and RNA, and RNA/DNA heteroduplexes in the 5'-to-3' direction. Plays a role in the RNA surveillance system in mitochondria; regulates the stability of mature mRNAs, the removal of aberrantly formed mRNAs and the rapid degradation of non coding processing intermediates. Also implicated in recombination and chromatin maintenance pathways. May protect cells from apoptosis. Associates with mitochondrial DNA. The chain is ATP-dependent RNA helicase SUPV3L1, mitochondrial (SUPV3L1) from Gallus gallus (Chicken).